A 504-amino-acid chain; its full sequence is Hexokinase-10 (504 aa).

A helical membrane pass occupies residues 7–29 (GWVRVAAVGWAVAACAVAAGMVA). The Hexokinase domain maps to 39-493 (NRAVAVVRDL…SGTGAALLAA (455 aa)). A hexokinase small subdomain region spans residues 94 to 226 (DGSEEGISYA…GLNMKVNVLV (133 aa)). ADP contacts are provided by Gly108 and Thr109. Residues Thr192, Lys193, Asn227, Asn254, Glu282, and Glu313 each contribute to the D-glucose site. The segment at 227 to 482 (NNTVGTLALG…ATVSLRVMEE (256 aa)) is hexokinase large subdomain. Gly447 is an ADP binding site.

The protein belongs to the hexokinase family. As to expression, expressed specifically in stamen.

Its subcellular location is the plastid. The protein resides in the chloroplast outer membrane. It catalyses the reaction a D-hexose + ATP = a D-hexose 6-phosphate + ADP + H(+). The enzyme catalyses D-fructose + ATP = D-fructose 6-phosphate + ADP + H(+). It carries out the reaction D-glucose + ATP = D-glucose 6-phosphate + ADP + H(+). The protein operates within carbohydrate metabolism; hexose metabolism. It functions in the pathway carbohydrate degradation; glycolysis; D-glyceraldehyde 3-phosphate and glycerone phosphate from D-glucose: step 1/4. Fructose and glucose phosphorylating enzyme. The chain is Hexokinase-10 (HXK10) from Oryza sativa subsp. japonica (Rice).